The primary structure comprises 426 residues: Glutamate-1-semialdehyde 2,1-aminomutase (426 aa).

K268 carries the N6-(pyridoxal phosphate)lysine modification.

Belongs to the class-III pyridoxal-phosphate-dependent aminotransferase family. HemL subfamily. Pyridoxal 5'-phosphate serves as cofactor.

The protein resides in the cytoplasm. The catalysed reaction is (S)-4-amino-5-oxopentanoate = 5-aminolevulinate. It participates in porphyrin-containing compound metabolism; protoporphyrin-IX biosynthesis; 5-aminolevulinate from L-glutamyl-tRNA(Glu): step 2/2. The polypeptide is Glutamate-1-semialdehyde 2,1-aminomutase (Saccharolobus islandicus (strain M.16.27) (Sulfolobus islandicus)).